Here is a 217-residue protein sequence, read N- to C-terminus: Dephospho-CoA kinase (217 aa).

A DPCK domain is found at 4–203 (IVALTGGISS…SHLSRIYNKN (200 aa)). Residue 12–17 (SSGKTT) coordinates ATP.

Belongs to the CoaE family.

The protein resides in the cytoplasm. It catalyses the reaction 3'-dephospho-CoA + ATP = ADP + CoA + H(+). Its pathway is cofactor biosynthesis; coenzyme A biosynthesis; CoA from (R)-pantothenate: step 5/5. Functionally, catalyzes the phosphorylation of the 3'-hydroxyl group of dephosphocoenzyme A to form coenzyme A. The chain is Dephospho-CoA kinase from Buchnera aphidicola subsp. Acyrthosiphon pisum (strain APS) (Acyrthosiphon pisum symbiotic bacterium).